The sequence spans 78 residues: UPF0335 protein A1E_00570 (78 aa).

This sequence belongs to the UPF0335 family.

This Rickettsia canadensis (strain McKiel) protein is UPF0335 protein A1E_00570.